The primary structure comprises 103 residues: Small ribosomal subunit protein uS10 (103 aa).

Belongs to the universal ribosomal protein uS10 family. In terms of assembly, part of the 30S ribosomal subunit.

In terms of biological role, involved in the binding of tRNA to the ribosomes. The polypeptide is Small ribosomal subunit protein uS10 (Shewanella amazonensis (strain ATCC BAA-1098 / SB2B)).